A 189-amino-acid polypeptide reads, in one-letter code: Movement protein (189 aa).

It belongs to the tombusvirus/aureusvirus movement protein p22 family. As to quaternary structure, interacts with host protein HFI22. In terms of processing, phosphorylated.

It localises to the host membrane. In terms of biological role, transports viral genome to neighboring plant cells directly through plasmosdesmata, without any budding. The movement protein allows efficient cell to cell propagation, by bypassing the host cell wall barrier. The protein is Movement protein of Capsicum annuum (Capsicum pepper).